Consider the following 169-residue polypeptide: Disulfide bond formation protein B (169 aa).

The Cytoplasmic portion of the chain corresponds to methionine 1 to leucine 14. The chain crosses the membrane as a helical span at residues leucine 15 to tyrosine 31. Over leucine 32–tyrosine 49 the chain is Periplasmic. Cysteine 41 and cysteine 44 are joined by a disulfide. The helical transmembrane segment at phenylalanine 50–methionine 64 threads the bilayer. At alanine 65–alanine 71 the chain is on the cytoplasmic side. Residues valine 72–alanine 89 traverse the membrane as a helical segment. Residues arginine 90 to glycine 144 lie on the Periplasmic side of the membrane. A disulfide bridge connects residues cysteine 102 and cysteine 130. A helical membrane pass occupies residues tryptophan 145–arginine 163. Topologically, residues histidine 164–arginine 169 are cytoplasmic.

The protein belongs to the DsbB family.

The protein resides in the cell inner membrane. Required for disulfide bond formation in some periplasmic proteins. Acts by oxidizing the DsbA protein. This chain is Disulfide bond formation protein B, found in Burkholderia thailandensis (strain ATCC 700388 / DSM 13276 / CCUG 48851 / CIP 106301 / E264).